The chain runs to 507 residues: MESWTWMTVVVLLGLTVRWTVSLNSYSGAGKPPMFGDYEAQRHWQEITLNLPVKQWYFNSSDNNLQYWGLDYPPLTAYHSLLCAYVAKFINPDWVALHTSRGYESQAHKLFMRTTVLAADLLIYIPAVLLYCYSLKEISPKRKIASALCILLYPGLILIDYGHFQYNSVSLGFALWGVLGVSCDWDLLGSLAFCLALNYKQMELYHSLPFFCFLLGKCFKKGLRGKGSALFIRIACTVVASFLLCWLPFLTEREHALQVVRRLFPVDRGLFEDKVANIWCSLNVFLKIKDILPRHIQIAISFCFTFLSLLPACIKLTVQPSAKGFRFTLVSCALSFFLFSFQVHEKSILLVSLPVCLVLTEIPFMSTWFLLVSTFSMLPLLLKDQLLLPSVVTVMAFLIACSTFFPMFENTSEEQLQLKSFAVSVRRHLPGFTFLPRIIQCLFLSSVITMILLTILSVTLDPPQKLPDLFSVLICFVSCVNFVFFLVYFNIVIMWDSKNGRNRKKID.

The Cytoplasmic portion of the chain corresponds to 1-2; that stretch reads ME. The helical transmembrane segment at 3 to 23 threads the bilayer; the sequence is SWTWMTVVVLLGLTVRWTVSL. Residues 24 to 114 lie on the Lumenal side of the membrane; that stretch reads NSYSGAGKPP…SQAHKLFMRT (91 aa). Asn-59 carries N-linked (GlcNAc...) asparagine glycosylation. A helical membrane pass occupies residues 115-135; that stretch reads TVLAADLLIYIPAVLLYCYSL. Topologically, residues 136 to 143 are cytoplasmic; that stretch reads KEISPKRK. A helical membrane pass occupies residues 144–164; it reads IASALCILLYPGLILIDYGHF. Topologically, residues 165–172 are lumenal; it reads QYNSVSLG. A helical transmembrane segment spans residues 173–193; sequence FALWGVLGVSCDWDLLGSLAF. The Cytoplasmic segment spans residues 194 to 229; sequence CLALNYKQMELYHSLPFFCFLLGKCFKKGLRGKGSA. A helical membrane pass occupies residues 230–250; the sequence is LFIRIACTVVASFLLCWLPFL. Topologically, residues 251 to 297 are lumenal; the sequence is TEREHALQVVRRLFPVDRGLFEDKVANIWCSLNVFLKIKDILPRHIQ. Residues 298-318 traverse the membrane as a helical segment; sequence IAISFCFTFLSLLPACIKLTV. The Cytoplasmic portion of the chain corresponds to 319-332; that stretch reads QPSAKGFRFTLVSC. The helical transmembrane segment at 333–353 threads the bilayer; the sequence is ALSFFLFSFQVHEKSILLVSL. The Lumenal segment spans residues 354–361; that stretch reads PVCLVLTE. A helical transmembrane segment spans residues 362–382; sequence IPFMSTWFLLVSTFSMLPLLL. Residues 383 to 385 lie on the Cytoplasmic side of the membrane; that stretch reads KDQ. A helical transmembrane segment spans residues 386-406; the sequence is LLLPSVVTVMAFLIACSTFFP. Over 407–437 the chain is Lumenal; it reads MFENTSEEQLQLKSFAVSVRRHLPGFTFLPR. The helical transmembrane segment at 438 to 458 threads the bilayer; the sequence is IIQCLFLSSVITMILLTILSV. At 459-468 the chain is on the cytoplasmic side; sequence TLDPPQKLPD. The helical transmembrane segment at 469–489 threads the bilayer; that stretch reads LFSVLICFVSCVNFVFFLVYF. Residues 490–507 are Lumenal-facing; it reads NIVIMWDSKNGRNRKKID.

It belongs to the ALG6/ALG8 glucosyltransferase family.

Its subcellular location is the endoplasmic reticulum membrane. It carries out the reaction an alpha-D-Man-(1-&gt;2)-alpha-D-Man-(1-&gt;2)-alpha-D-Man-(1-&gt;3)-[alpha-D-Man-(1-&gt;2)-alpha-D-Man-(1-&gt;3)-[alpha-D-Man-(1-&gt;2)-alpha-D-Man-(1-&gt;6)]-alpha-D-Man-(1-&gt;6)]-beta-D-Man-(1-&gt;4)-beta-D-GlcNAc-(1-&gt;4)-alpha-D-GlcNAc-diphospho-di-trans,poly-cis-dolichol + a di-trans,poly-cis-dolichyl beta-D-glucosyl phosphate = an alpha-D-Glc-(1-&gt;3)-alpha-D-Man-(1-&gt;2)-alpha-D-Man-(1-&gt;2)-alpha-D-Man-(1-&gt;3)-[alpha-D-Man-(1-&gt;2)-alpha-D-Man-(1-&gt;3)-[alpha-D-Man-(1-&gt;2)-alpha-D-Man-(1-&gt;6)]-alpha-D-Man-(1-&gt;6)]-beta-D-Man-(1-&gt;4)-beta-D-GlcNAc-(1-&gt;4)-alpha-D-GlcNAc-diphospho-di-trans,poly-cis-dolichol + a di-trans,poly-cis-dolichyl phosphate + H(+). The protein operates within protein modification; protein glycosylation. Functionally, dolichyl pyrophosphate Man9GlcNAc2 alpha-1,3-glucosyltransferase that operates in the biosynthetic pathway of dolichol-linked oligosaccharides, the glycan precursors employed in protein asparagine (N)-glycosylation. The assembly of dolichol-linked oligosaccharides begins on the cytosolic side of the endoplasmic reticulum membrane and finishes in its lumen. The sequential addition of sugars to dolichol pyrophosphate produces dolichol-linked oligosaccharides containing fourteen sugars, including two GlcNAcs, nine mannoses and three glucoses. Once assembled, the oligosaccharide is transferred from the lipid to nascent proteins by oligosaccharyltransferases. In the lumen of the endoplasmic reticulum, adds the first glucose residue from dolichyl phosphate glucose (Dol-P-Glc) onto the lipid-linked oligosaccharide intermediate Man(9)GlcNAc(2)-PP-Dol to produce Glc(1)Man(9)GlcNAc(2)-PP-Dol. Glc(1)Man(9)GlcNAc(2)-PP-Dol is a substrate for ALG8, the following enzyme in the biosynthetic pathway. The chain is Dolichyl pyrophosphate Man9GlcNAc2 alpha-1,3-glucosyltransferase from Rattus norvegicus (Rat).